Here is a 461-residue protein sequence, read N- to C-terminus: Cysteine--tRNA ligase (461 aa).

Cys-28 contacts Zn(2+). The short motif at 30–40 (VTIYDLCHIGH) is the 'HIGH' region element. Residues Cys-211, His-236, and Glu-240 each contribute to the Zn(2+) site. The 'KMSKS' region motif lies at 268 to 272 (KMSKS). ATP is bound at residue Lys-271.

The protein belongs to the class-I aminoacyl-tRNA synthetase family. In terms of assembly, monomer. Zn(2+) is required as a cofactor.

The protein localises to the cytoplasm. It carries out the reaction tRNA(Cys) + L-cysteine + ATP = L-cysteinyl-tRNA(Cys) + AMP + diphosphate. This is Cysteine--tRNA ligase from Aliivibrio fischeri (strain ATCC 700601 / ES114) (Vibrio fischeri).